We begin with the raw amino-acid sequence, 141 residues long: Hemoglobin subunit alpha-D (141 aa).

One can recognise a Globin domain in the interval 1 to 141 (VLTGEDKKHV…VAAVLAEKYR (141 aa)). Positions 58 and 87 each coordinate heme b.

This sequence belongs to the globin family. Heterotetramer of two alpha-D chains and two beta chains. Red blood cells.

Its function is as follows. Involved in oxygen transport from the lung to the various peripheral tissues. The protein is Hemoglobin subunit alpha-D (HBAD) of Turdus merula (Common blackbird).